Here is a 397-residue protein sequence, read N- to C-terminus: Flavohemoprotein A (397 aa).

Residues 2-137 (SLSQQSISII…IAQAFIDAEA (136 aa)) form the Globin domain. Histidine 84 is a heme b binding site. Residues tyrosine 94 and glutamate 136 each act as charge relay system in the active site. Residues 150–397 (WRDTREFIVD…YEIFGPLTNV (248 aa)) form a reductase region. Residues 151–266 (RDTREFIVDR…SPPAGDYVVD (116 aa)) enclose the FAD-binding FR-type domain. FAD-binding positions include tyrosine 189 and 208-211 (RHYS). An NADP(+)-binding site is contributed by 279–284 (GVGITP). 390-393 (IFGP) provides a ligand contact to FAD.

It belongs to the globin family. Two-domain flavohemoproteins subfamily. The protein in the C-terminal section; belongs to the flavoprotein pyridine nucleotide cytochrome reductase family. FAD is required as a cofactor. It depends on heme b as a cofactor.

It is found in the cytoplasm. It carries out the reaction 2 nitric oxide + NADPH + 2 O2 = 2 nitrate + NADP(+) + H(+). The catalysed reaction is 2 nitric oxide + NADH + 2 O2 = 2 nitrate + NAD(+) + H(+). Functionally, is involved in NO detoxification in an aerobic process, termed nitric oxide dioxygenase (NOD) reaction that utilizes O(2) and NAD(P)H to convert NO to nitrate, which protects the cell from various noxious nitrogen compounds. Therefore, plays a central role in the inducible response to nitrosative stress. In terms of biological role, in the presence of oxygen and NADH, it has NADH oxidase activity, which leads to the generation of superoxide and H(2)O(2). Under anaerobic conditions, it also exhibits nitric oxide reductase and FAD reductase activities. However, all these reactions are much lower than NOD activity. In Dictyostelium discoideum (Social amoeba), this protein is Flavohemoprotein A (fhbA).